Reading from the N-terminus, the 603-residue chain is Beta-glucuronidase (603 aa).

2 residues coordinate D-glucuronate: aspartate 163 and asparagine 412. Residue glutamate 413 is the Proton donor of the active site. D-glucuronate contacts are provided by asparagine 466, tyrosine 472, glutamate 504, tryptophan 549, and lysine 568. Glutamate 504 (nucleophile) is an active-site residue. The N-K motif motif lies at 566–568 (NKK).

The protein belongs to the glycosyl hydrolase 2 family. In terms of assembly, homotetramer.

It catalyses the reaction a beta-D-glucuronoside + H2O = D-glucuronate + an alcohol. It carries out the reaction 4-methylumbelliferone beta-D-glucuronate + H2O = 4-methylumbelliferone + D-glucuronate. With respect to regulation, potently inhibited by a set of synthetic compounds like thio-urea derivatives and analogs, and uronic isofagomine (UIFG) derivatives. Inhibitors of gut microbial beta-glucuronidases block the reactivation of glucuronidated cancer drugs, and thereby alleviate drug-induced GI toxicity. Displays beta-glucuronidase activity with the artificial substrate p-nitrophenyl-beta-D-glucuronide (PNPG) and with 4-methylumbelliferyl-glucuronide. Is likely capable of scavenging glucuronate from a range of chemically distinct xenobiotic and endobiotic glucuronides present in the gastrointestinal (GI) tract, to be able to utilize these diverse sources of carbon. As part of the GI microbiome, this enzyme is able to reactivate glucuronide drug conjugates, such reactivated compounds can significantly damage the GI tract. This chain is Beta-glucuronidase (uidA), found in Escherichia coli (strain K12).